A 469-amino-acid chain; its full sequence is Collagenase 3 (469 aa).

Residues 1-17 (SSLSVLVLSLSFAYCLS) form the signal peptide. Positions 18–100 (APVPQDEDSE…QPRCGVPDVG (83 aa)) are cleaved as a propeptide — activation peptide. Residues 92-99 (PRCGVPDV) carry the Cysteine switch motif. Zn(2+) is bound at residue C94. N115 carries an N-linked (GlcNAc...) asparagine glycan. D126 lines the Ca(2+) pocket. N150 carries N-linked (GlcNAc...) asparagine glycosylation. Residue D160 participates in Ca(2+) binding. Residues H170 and D172 each contribute to the Zn(2+) site. D177, G178, and L182 together coordinate Ca(2+). H185 serves as a coordination point for Zn(2+). G194 and D196 together coordinate Ca(2+). H198 serves as a coordination point for Zn(2+). Ca(2+) contacts are provided by D200, D201, and E203. Zn(2+) is bound at residue H220. Residue E221 is part of the active site. Zn(2+)-binding residues include H224, H230, and M238. The interval 266 to 469 (PGNRDPHPKH…ILKTNFVLMC (204 aa)) is interaction with collagen. Hemopexin repeat units follow at residues 279-328 (PEKC…WPEL), 329-375 (PNKL…GFPK), 377-425 (LKAI…FPGI), and 426-469 (GEKV…VLMC). Cysteines 282 and 469 form a disulfide. The Ca(2+) site is built by D289, I291, D333, A335, A383, and D430.

The protein belongs to the peptidase M10A family. Ca(2+) is required as a cofactor. It depends on Zn(2+) as a cofactor. The proenzyme is activated by removal of the propeptide; this cleavage can be effected by other matrix metalloproteinases and may involve several cleavage steps. Cleavage can also be autocatalytic, after partial maturation by another protease or after treatment with 4-aminophenylmercuric acetate (APMA) (in vitro).

Its subcellular location is the secreted. It localises to the extracellular space. The protein resides in the extracellular matrix. Functionally, plays a role in the degradation of extracellular matrix proteins including fibrillar collagen, fibronectin, TNC and ACAN. Cleaves several types of triple helical collagen. May also function by activating or degrading key regulatory proteins. Plays a role in wound healing, tissue remodeling, cartilage degradation, bone development, bone mineralization and ossification. This Xenopus laevis (African clawed frog) protein is Collagenase 3 (mmp13).